The sequence spans 737 residues: Amino-acid acetyltransferase, mitochondrial (737 aa).

Residues 1–47 (MSRSTVLGWCTQSCRLLQKHDHSFSFPTFNGSPPLKKRRFCDSAAPA) constitute a mitochondrion transit peptide. Residues 43–78 (SAAPAAPRPSIHRPSEYIPHSKSGGEAPQDLGHKAR) form a disordered region. The N-acetyltransferase domain maps to 558 to 727 (GEPALTLDDP…YEGVCRAIEP (170 aa)).

The protein belongs to the acetyltransferase family.

It localises to the mitochondrion. The enzyme catalyses L-glutamate + acetyl-CoA = N-acetyl-L-glutamate + CoA + H(+). Its pathway is amino-acid biosynthesis; L-arginine biosynthesis; N(2)-acetyl-L-ornithine from L-glutamate: step 1/4. N-acetylglutamate synthase involved in arginine biosynthesis. The sequence is that of Amino-acid acetyltransferase, mitochondrial (ARG2) from Coccidioides immitis (strain RS) (Valley fever fungus).